The primary structure comprises 311 residues: Acetyl-coenzyme A carboxylase carboxyl transferase subunit beta (311 aa).

Residues 27 to 296 enclose the CoA carboxyltransferase N-terminal domain; the sequence is LWTKCGHCSA…AEAADAPEAG (270 aa). Residues cysteine 31, cysteine 34, cysteine 50, and cysteine 53 each coordinate Zn(2+). The C4-type zinc finger occupies 31–53; it reads CGHCSAVLYRPELERNQEVCPKC. Over residues 286-299 the composition is skewed to low complexity; sequence AAEAADAPEAGEQP. The disordered stretch occupies residues 286–311; the sequence is AAEAADAPEAGEQPSEATDPVGEHWD.

This sequence belongs to the AccD/PCCB family. Acetyl-CoA carboxylase is a heterohexamer composed of biotin carboxyl carrier protein (AccB), biotin carboxylase (AccC) and two subunits each of ACCase subunit alpha (AccA) and ACCase subunit beta (AccD). It depends on Zn(2+) as a cofactor.

It localises to the cytoplasm. It carries out the reaction N(6)-carboxybiotinyl-L-lysyl-[protein] + acetyl-CoA = N(6)-biotinyl-L-lysyl-[protein] + malonyl-CoA. The protein operates within lipid metabolism; malonyl-CoA biosynthesis; malonyl-CoA from acetyl-CoA: step 1/1. In terms of biological role, component of the acetyl coenzyme A carboxylase (ACC) complex. Biotin carboxylase (BC) catalyzes the carboxylation of biotin on its carrier protein (BCCP) and then the CO(2) group is transferred by the transcarboxylase to acetyl-CoA to form malonyl-CoA. The sequence is that of Acetyl-coenzyme A carboxylase carboxyl transferase subunit beta from Alkalilimnicola ehrlichii (strain ATCC BAA-1101 / DSM 17681 / MLHE-1).